Consider the following 302-residue polypeptide: Homoserine O-acetyltransferase (302 aa).

Residue Cys142 is the Acyl-thioester intermediate of the active site. Residues Lys163 and Ser192 each coordinate substrate. His235 acts as the Proton acceptor in catalysis. Residue Glu237 is part of the active site. Arg249 is a binding site for substrate.

It belongs to the MetA family.

Its subcellular location is the cytoplasm. The enzyme catalyses L-homoserine + acetyl-CoA = O-acetyl-L-homoserine + CoA. Its pathway is amino-acid biosynthesis; L-methionine biosynthesis via de novo pathway; O-acetyl-L-homoserine from L-homoserine: step 1/1. In terms of biological role, transfers an acetyl group from acetyl-CoA to L-homoserine, forming acetyl-L-homoserine. In Geobacillus kaustophilus, this protein is Homoserine O-acetyltransferase.